The primary structure comprises 405 residues: Na(+)-translocating NADH-quinone reductase subunit F (405 aa).

The chain crosses the membrane as a helical span at residues 3 to 23; it reads IILGIVMFTVIVLVLALMILF. Residues 32-124 enclose the 2Fe-2S ferredoxin-type domain; it reads GDITIKVNGE…DMDIEVPEEV (93 aa). Residues C67, C73, C76, and C108 each contribute to the [2Fe-2S] cluster site. An FAD-binding FR-type domain is found at 127–267; sequence VKKWECTVIS…SGPFGEFFAK (141 aa).

It belongs to the NqrF family. In terms of assembly, composed of six subunits; NqrA, NqrB, NqrC, NqrD, NqrE and NqrF. It depends on [2Fe-2S] cluster as a cofactor. FAD serves as cofactor.

It is found in the cell inner membrane. It catalyses the reaction a ubiquinone + n Na(+)(in) + NADH + H(+) = a ubiquinol + n Na(+)(out) + NAD(+). NQR complex catalyzes the reduction of ubiquinone-1 to ubiquinol by two successive reactions, coupled with the transport of Na(+) ions from the cytoplasm to the periplasm. The first step is catalyzed by NqrF, which accepts electrons from NADH and reduces ubiquinone-1 to ubisemiquinone by a one-electron transfer pathway. This is Na(+)-translocating NADH-quinone reductase subunit F from Neisseria meningitidis serogroup C / serotype 2a (strain ATCC 700532 / DSM 15464 / FAM18).